A 523-amino-acid chain; its full sequence is UPF0329 protein ECU02_0050 (523 aa).

Positions Glu-326 to Arg-386 are disordered. Over residues Lys-330–Ser-339 the composition is skewed to basic residues. Over residues Glu-344–Ser-353 the composition is skewed to basic and acidic residues. Residues Glu-354–Ser-368 are compositionally biased toward acidic residues.

The protein belongs to the UPF0329 family.

In Encephalitozoon cuniculi (strain GB-M1) (Microsporidian parasite), this protein is UPF0329 protein ECU02_0050.